Here is a 317-residue protein sequence, read N- to C-terminus: L-lactate dehydrogenase (317 aa).

Residues Val17, Asp38, Lys43, Tyr69, and 83–84 (GA) contribute to the NAD(+) site. 2 residues coordinate substrate: Gln86 and Arg92. Residues Ser105, 122-124 (ATN), and Ser147 each bind NAD(+). 124–127 (NPVD) contributes to the substrate binding site. 152-155 (DTAR) lines the substrate pocket. The beta-D-fructose 1,6-bisphosphate site is built by Arg157 and His172. The active-site Proton acceptor is the His179. Tyr224 carries the phosphotyrosine modification. Residue Thr233 participates in substrate binding.

The protein belongs to the LDH/MDH superfamily. LDH family. As to quaternary structure, homotetramer.

The protein resides in the cytoplasm. It catalyses the reaction (S)-lactate + NAD(+) = pyruvate + NADH + H(+). Its pathway is fermentation; pyruvate fermentation to lactate; (S)-lactate from pyruvate: step 1/1. Its activity is regulated as follows. Allosterically activated by fructose 1,6-bisphosphate (FBP). Catalyzes the conversion of lactate to pyruvate. In Bacillus caldolyticus, this protein is L-lactate dehydrogenase.